Here is a 47-residue protein sequence, read N- to C-terminus: Small, acid-soluble spore protein K (47 aa).

The interval 1-47 (MRNKAHGFPHRISFDGEPDRAKHASKRANGTINTKPQERMHQANPDQ) is disordered. Residues 12–22 (ISFDGEPDRAK) are compositionally biased toward basic and acidic residues.

The protein belongs to the SspK family.

It localises to the spore core. In Halalkalibacterium halodurans (strain ATCC BAA-125 / DSM 18197 / FERM 7344 / JCM 9153 / C-125) (Bacillus halodurans), this protein is Small, acid-soluble spore protein K.